Consider the following 450-residue polypeptide: MGKYFGTDGVRGEANVELTPELAFKLGRFGGYVLSQHETDRPRVFVARDTRISGEMLESALIAGLLSVGIEVYKLGVLATPGVSYLVRTEKASAGVMISASHNPALDNGIKFFGSDGFKLDDDRELEIEALLDAKEDTLPRPSAQGLGTLVDYPEGLRKYEKFMESTGIDLEGMKVALDTANGAATASARNIFLDLNADISVIGDQPDGLNINDGVGSTHPEQLQSLVRENGSDIGLAFDGDSDRLIAVDENGEIVDGDKIMFIIGKYLSDKGQLAQNTIVTTVMSNLGFHKALDREGIHKAITAVGDRYVVEEMRKSGYNLGGEQSGHVIIMDYNTTGDGQLTAIQLTKVMKETGKKLSELASEVTIYPQKLVNIRVENNMKDKAMEVPAIAEIIAKMEEEMDGNGRILVRPSGTEPLLRVMAEAPTNEAVDYYVDTIADVVRTEIGLD.

Catalysis depends on Ser-101, which acts as the Phosphoserine intermediate. Mg(2+) is bound by residues Ser-101, Asp-240, Asp-242, and Asp-244. Ser-101 bears the Phosphoserine mark.

This sequence belongs to the phosphohexose mutase family. Requires Mg(2+) as cofactor. Activated by phosphorylation.

The catalysed reaction is alpha-D-glucosamine 1-phosphate = D-glucosamine 6-phosphate. Its function is as follows. Catalyzes the conversion of glucosamine-6-phosphate to glucosamine-1-phosphate. This Streptococcus agalactiae serotype Ia (strain ATCC 27591 / A909 / CDC SS700) protein is Phosphoglucosamine mutase.